Reading from the N-terminus, the 81-residue chain is 8.6 kDa transglutaminase substrate (81 aa).

As to quaternary structure, multimeric. In terms of tissue distribution, hemolymph; Hemocyte.

This chain is 8.6 kDa transglutaminase substrate, found in Tachypleus tridentatus (Japanese horseshoe crab).